We begin with the raw amino-acid sequence, 309 residues long: Probable pyridoxal 5'-phosphate synthase subunit PDX1 (309 aa).

Residue D40 coordinates D-ribose 5-phosphate. The active-site Schiff-base intermediate with D-ribose 5-phosphate is K97. D-ribose 5-phosphate is bound at residue G169. R181 contributes to the D-glyceraldehyde 3-phosphate binding site. D-ribose 5-phosphate-binding positions include G230 and 251–252 (GS).

It belongs to the PdxS/SNZ family.

It catalyses the reaction aldehydo-D-ribose 5-phosphate + D-glyceraldehyde 3-phosphate + L-glutamine = pyridoxal 5'-phosphate + L-glutamate + phosphate + 3 H2O + H(+). It participates in cofactor biosynthesis; pyridoxal 5'-phosphate biosynthesis. Its function is as follows. Catalyzes the formation of pyridoxal 5'-phosphate from ribose 5-phosphate (RBP), glyceraldehyde 3-phosphate (G3P) and ammonia. The ammonia is provided by PDX2. Can also use ribulose 5-phosphate and dihydroxyacetone phosphate as substrates, resulting from enzyme-catalyzed isomerization of RBP and G3P, respectively. Also plays an indirect role in resistance to singlet oxygen-generating photosensitizers. The polypeptide is Probable pyridoxal 5'-phosphate synthase subunit PDX1 (PDX1) (Hevea brasiliensis (Para rubber tree)).